Here is a 30-residue protein sequence, read N- to C-terminus: V-type proton ATPase catalytic subunit A isoform 2 (30 aa).

It belongs to the ATPase alpha/beta chains family. V-ATPase is a heteromultimeric enzyme composed of a peripheral catalytic V1 complex (main components: subunits A, B, C, D, E, and F) attached to an integral membrane V0 proton pore complex (main component: the proteolipid protein).

The enzyme catalyses ATP + H2O + 4 H(+)(in) = ADP + phosphate + 5 H(+)(out). In terms of biological role, catalytic subunit of the peripheral V1 complex of vacuolar ATPase. V-ATPase vacuolar ATPase is responsible for acidifying a variety of intracellular compartments in eukaryotic cells. In Equisetum arvense (Field horsetail), this protein is V-type proton ATPase catalytic subunit A isoform 2.